A 496-amino-acid polypeptide reads, in one-letter code: Ribose import ATP-binding protein RbsA (496 aa).

ABC transporter domains lie at Leu5–Glu241 and Ser252–Glu496. Gly37–Ser44 lines the ATP pocket.

Belongs to the ABC transporter superfamily. Ribose importer (TC 3.A.1.2.1) family. The complex is composed of an ATP-binding protein (RbsA), two transmembrane proteins (RbsC) and a solute-binding protein (RbsB).

The protein localises to the cell membrane. The enzyme catalyses D-ribose(out) + ATP + H2O = D-ribose(in) + ADP + phosphate + H(+). Its function is as follows. Part of the ABC transporter complex RbsABC involved in ribose import. Responsible for energy coupling to the transport system. The protein is Ribose import ATP-binding protein RbsA of Caldanaerobacter subterraneus subsp. tengcongensis (strain DSM 15242 / JCM 11007 / NBRC 100824 / MB4) (Thermoanaerobacter tengcongensis).